The following is a 282-amino-acid chain: Putative 4-diphosphocytidyl-2-C-methyl-D-erythritol kinase (282 aa).

Lys9 is an active-site residue. Pro93–Ala103 is a binding site for ATP. Residue Asp135 is part of the active site.

The protein belongs to the GHMP kinase family. IspE subfamily.

It carries out the reaction 4-CDP-2-C-methyl-D-erythritol + ATP = 4-CDP-2-C-methyl-D-erythritol 2-phosphate + ADP + H(+). Functionally, catalyzes the phosphorylation of the position 2 hydroxy group of 4-diphosphocytidyl-2C-methyl-D-erythritol. The polypeptide is Putative 4-diphosphocytidyl-2-C-methyl-D-erythritol kinase (Staphylococcus aureus (strain MSSA476)).